Reading from the N-terminus, the 313-residue chain is MTFEEITNKILVKDKDYEMPFSKGLLTRSLTAAGMKPSESYILAREIERDLTDQGLRKISKDELRRRVYYALINRDYEDIAEKYLLWRRVLKKHSIIILVGGASGVGTSTIAFELASRLGIPSVIGTDSIREVMRRSISKDLVPMLYESSYTAWKALRHSSAEEYDTKEMHLLGFERHVEPVLIGIESIIDRSLTEGMSVILEGTHIVPGLLGEKYHSMQNVIILNLTLSSEEIHKQRFVARAKVSDRPLERYLSNFEIIKEINEYIVKKSRENKVPVIENVSISETVQKCLEIVTDRFVDLNEESEADSEIY.

An ATP-cone domain is found at 8 to 95; sequence NKILVKDKDY…LWRRVLKKHS (88 aa).

This sequence belongs to the 2-phosphoglycerate kinase family. It depends on a divalent metal cation as a cofactor.

The enzyme catalyses (2R)-2-phosphoglycerate + ATP = (2R)-2,3-bisphosphoglycerate + ADP + H(+). Its pathway is thermoadapter biosynthesis; cyclic 2,3-diphosphoglycerate biosynthesis; cyclic 2,3-diphosphoglycerate from 2-phospho-D-glycerate: step 1/2. Its function is as follows. Catalyzes the phosphorylation of 2-phosphoglycerate to 2,3-diphosphoglycerate. Involved in the biosynthesis of cyclic 2,3-bisphosphoglycerate, a thermoprotectant. This Methanococcus vannielii (strain ATCC 35089 / DSM 1224 / JCM 13029 / OCM 148 / SB) protein is 2-phosphoglycerate kinase.